The following is a 499-amino-acid chain: Glycerol kinase (499 aa).

Thr12 is an ADP binding site. Positions 12, 13, and 14 each coordinate ATP. A sn-glycerol 3-phosphate-binding site is contributed by Thr12. ADP is bound at residue Arg16. Sn-glycerol 3-phosphate contacts are provided by Arg82, Glu83, and Tyr134. Residues Arg82, Glu83, and Tyr134 each coordinate glycerol. His230 bears the Phosphohistidine; by HPr mark. Asp244 contacts sn-glycerol 3-phosphate. Glycerol is bound by residues Asp244 and Gln245. ADP contacts are provided by Thr266 and Gly309. ATP contacts are provided by Thr266, Gly309, Gln313, and Gly410. ADP is bound by residues Gly410 and Asn414.

It belongs to the FGGY kinase family. In terms of assembly, homotetramer and homodimer (in equilibrium). In terms of processing, the phosphoenolpyruvate-dependent sugar phosphotransferase system (PTS), including enzyme I, and histidine-containing protein (HPr) are required for the phosphorylation, which leads to the activation of the enzyme.

It catalyses the reaction glycerol + ATP = sn-glycerol 3-phosphate + ADP + H(+). It participates in polyol metabolism; glycerol degradation via glycerol kinase pathway; sn-glycerol 3-phosphate from glycerol: step 1/1. With respect to regulation, activated by phosphorylation and inhibited by fructose 1,6-bisphosphate (FBP). Functionally, key enzyme in the regulation of glycerol uptake and metabolism. Catalyzes the phosphorylation of glycerol to yield sn-glycerol 3-phosphate. The sequence is that of Glycerol kinase from Staphylococcus epidermidis (strain ATCC 12228 / FDA PCI 1200).